The chain runs to 735 residues: Putative RNA polymerase II subunit B1 CTD phosphatase RPAP2 homolog (735 aa).

The RTR1-type zinc-finger motif lies at alanine 33–aspartate 118. Cysteine 56, cysteine 61, cysteine 94, and cysteine 98 together coordinate Zn(2+). Disordered stretches follow at residues valine 179 to histidine 201, glycine 349 to lysine 374, and glutamate 519 to lysine 538. Over residues glycine 349–glycine 364 the composition is skewed to low complexity. Residues glutamate 519–proline 530 show a composition bias toward acidic residues.

The protein belongs to the RPAP2 family.

The protein resides in the nucleus. It catalyses the reaction O-phospho-L-seryl-[protein] + H2O = L-seryl-[protein] + phosphate. The catalysed reaction is O-phospho-L-threonyl-[protein] + H2O = L-threonyl-[protein] + phosphate. In terms of biological role, putative RNA polymerase II subunit B1 C-terminal domain (CTD) phosphatase involved in RNA polymerase II transcription regulation. The sequence is that of Putative RNA polymerase II subunit B1 CTD phosphatase RPAP2 homolog from Arabidopsis thaliana (Mouse-ear cress).